The sequence spans 139 residues: Protein VP5 (139 aa).

Residues 94–139 (RDALPPTDLGTTMPTTNRSRSARPTPRPMGSTSTQQHPQRSRSTCR) are disordered. A compositionally biased stretch (polar residues) spans 102–112 (LGTTMPTTNRS).

The protein is Protein VP5 (VP5) of Channa lucius (Forest snakehead).